The sequence spans 104 residues: Large ribosomal subunit protein uL24 (104 aa).

Belongs to the universal ribosomal protein uL24 family. In terms of assembly, part of the 50S ribosomal subunit.

One of two assembly initiator proteins, it binds directly to the 5'-end of the 23S rRNA, where it nucleates assembly of the 50S subunit. Functionally, one of the proteins that surrounds the polypeptide exit tunnel on the outside of the subunit. This Shewanella woodyi (strain ATCC 51908 / MS32) protein is Large ribosomal subunit protein uL24.